Here is a 2298-residue protein sequence, read N- to C-terminus: Protein Ycf2 (2298 aa).

An ATP-binding site is contributed by 1640–1647 (GSIGTGRS).

Belongs to the Ycf2 family.

Its subcellular location is the plastid. It localises to the chloroplast stroma. Functionally, probable ATPase of unknown function. Its presence in a non-photosynthetic plant (Epifagus virginiana) and experiments in tobacco indicate that it has an essential function which is probably not related to photosynthesis. The protein is Protein Ycf2 of Carica papaya (Papaya).